Consider the following 1872-residue polypeptide: Fatty acid synthase beta subunit pkiC (1872 aa).

The tract at residues 174-425 (VFGGQGECSR…DQSRIPFRDR (252 aa)) is acetyltransferase (AT) domain. The enoyl reductase (ER) domain stretch occupies residues 591-836 (NRVLGAPPIM…IIAATPGVSD (246 aa)). The disordered stretch occupies residues 1111–1132 (TTPASWSTLSLTERDTSEETSD). Positions 1158–1597 (PSHPLWMRAL…MPLEKLVVEI (440 aa)) are dehydratase (DH) domain. The MaoC-like domain occupies 1518 to 1617 (PPSNEPYAQL…CFSILAKRKE (100 aa)).

Belongs to the fungal fatty acid synthetase subunit beta family. [Alpha(6)beta(6)] hexamers of two multifunctional subunits (alpha and beta).

It catalyses the reaction acetyl-CoA + n malonyl-CoA + 2n NADPH + 4n H(+) = a long-chain-acyl-CoA + n CoA + n CO2 + 2n NADP(+).. It carries out the reaction holo-[ACP] + acetyl-CoA = acetyl-[ACP] + CoA. The enzyme catalyses holo-[ACP] + malonyl-CoA = malonyl-[ACP] + CoA. The catalysed reaction is a (3R)-hydroxyacyl-[ACP] = a (2E)-enoyl-[ACP] + H2O. It catalyses the reaction a 2,3-saturated acyl-[ACP] + NAD(+) = a (2E)-enoyl-[ACP] + NADH + H(+). It carries out the reaction (9Z)-octadecenoyl-[ACP] + H2O = (9Z)-octadecenoate + holo-[ACP] + H(+). It participates in secondary metabolite biosynthesis. Functionally, fatty acid synthase beta subunit; part of the pki gene cluster that mediates the biosynthesis of 2,4-dihydroxy-3-methyl-6-(2-oxoundecyl)benzaldehyde. The first step in the pathway is the generation of the decanoyl starter unit by the FAS composed of subunits pkiB and pkiC, which is then transferred directly from the FAS to the SAT domain of the non-reducing polyketide synthase pkiA. PkiA condenses the decanoyyl starter unit with 4 malonyl-CoA units and performs one methylation step to yield 2,4-dihydroxy-3-methyl-6-(2-oxoundecyl)benzaldehyde. The chain is Fatty acid synthase beta subunit pkiC from Emericella nidulans (strain FGSC A4 / ATCC 38163 / CBS 112.46 / NRRL 194 / M139) (Aspergillus nidulans).